Consider the following 330-residue polypeptide: Phosphate acyltransferase (330 aa).

It belongs to the PlsX family. Homodimer. Probably interacts with PlsY.

The protein resides in the cytoplasm. It carries out the reaction a fatty acyl-[ACP] + phosphate = an acyl phosphate + holo-[ACP]. It functions in the pathway lipid metabolism; phospholipid metabolism. In terms of biological role, catalyzes the reversible formation of acyl-phosphate (acyl-PO(4)) from acyl-[acyl-carrier-protein] (acyl-ACP). This enzyme utilizes acyl-ACP as fatty acyl donor, but not acyl-CoA. The protein is Phosphate acyltransferase of Carboxydothermus hydrogenoformans (strain ATCC BAA-161 / DSM 6008 / Z-2901).